The primary structure comprises 199 residues: Cilia- and flagella-associated protein 20 (199 aa).

The protein belongs to the CFAP20 family. Expressed in spermatocytes and chordotonal organs in sensory neurons of the antenna.

It is found in the nucleus. It localises to the nucleolus. The protein resides in the cell projection. The protein localises to the cilium. Its subcellular location is the cytoplasm. It is found in the cytoskeleton. It localises to the microtubule organizing center. The protein resides in the centrosome. The protein localises to the centriole. Its subcellular location is the flagellum. It is found in the cilium axoneme. Functionally, cilium- and flagellum-specific protein that plays a role in axonemal structure organization and motility. Microtubule inner protein (MIP) part of the dynein-decorated doublet microtubules (DMTs) in cilia axoneme, which is required for motile cilia beating. Involved in the regulation of the size and morphology of cilia. Required for sperm individualization, differentiation of the sperm flagellum and tubulin polyglycylation of axonemal microtubules. The sequence is that of Cilia- and flagella-associated protein 20 from Drosophila melanogaster (Fruit fly).